Here is a 343-residue protein sequence, read N- to C-terminus: S-adenosylmethionine:tRNA ribosyltransferase-isomerase (343 aa).

This sequence belongs to the QueA family. As to quaternary structure, monomer.

Its subcellular location is the cytoplasm. It catalyses the reaction 7-aminomethyl-7-carbaguanosine(34) in tRNA + S-adenosyl-L-methionine = epoxyqueuosine(34) in tRNA + adenine + L-methionine + 2 H(+). It participates in tRNA modification; tRNA-queuosine biosynthesis. Functionally, transfers and isomerizes the ribose moiety from AdoMet to the 7-aminomethyl group of 7-deazaguanine (preQ1-tRNA) to give epoxyqueuosine (oQ-tRNA). This is S-adenosylmethionine:tRNA ribosyltransferase-isomerase from Coxiella burnetii (strain Dugway 5J108-111).